Reading from the N-terminus, the 401-residue chain is Adenylosuccinate synthetase (401 aa).

Residues 12-18 (GDEGKGK) and 40-42 (GHT) contribute to the GTP site. Asp13 (proton acceptor) is an active-site residue. Positions 13 and 40 each coordinate Mg(2+). IMP-binding positions include 13–16 (DEGK), 38–41 (NAGH), Thr128, Arg142, Gln212, Thr227, and Arg290. His41 acts as the Proton donor in catalysis. 286–292 (ATTRRPR) contributes to the substrate binding site. Residues Arg292, 318–320 (KAD), and 390–392 (STG) contribute to the GTP site.

This sequence belongs to the adenylosuccinate synthetase family. As to quaternary structure, homodimer. It depends on Mg(2+) as a cofactor.

Its subcellular location is the cytoplasm. It catalyses the reaction IMP + L-aspartate + GTP = N(6)-(1,2-dicarboxyethyl)-AMP + GDP + phosphate + 2 H(+). It functions in the pathway purine metabolism; AMP biosynthesis via de novo pathway; AMP from IMP: step 1/2. Plays an important role in the de novo pathway of purine nucleotide biosynthesis. Catalyzes the first committed step in the biosynthesis of AMP from IMP. The sequence is that of Adenylosuccinate synthetase from Pseudothermotoga lettingae (strain ATCC BAA-301 / DSM 14385 / NBRC 107922 / TMO) (Thermotoga lettingae).